The chain runs to 557 residues: Membrane protein insertase YidC (557 aa).

The next 3 membrane-spanning stretches (helical) occupy residues Trp371–Ala391, Leu437–Leu457, and Pro515–Val535.

Belongs to the OXA1/ALB3/YidC family. Type 1 subfamily. Interacts with the Sec translocase complex via SecD. Specifically interacts with transmembrane segments of nascent integral membrane proteins during membrane integration.

The protein localises to the cell inner membrane. Required for the insertion and/or proper folding and/or complex formation of integral membrane proteins into the membrane. Involved in integration of membrane proteins that insert both dependently and independently of the Sec translocase complex, as well as at least some lipoproteins. Aids folding of multispanning membrane proteins. The sequence is that of Membrane protein insertase YidC from Polynucleobacter necessarius subsp. necessarius (strain STIR1).